The sequence spans 363 residues: GTPase Obg (363 aa).

Residues 1–159 (MKFVDEAFID…KSLKLELKVL (159 aa)) enclose the Obg domain. The OBG-type G domain occupies 160-341 (ADVGLLGRPN…LVHAIFGHVQ (182 aa)). GTP contacts are provided by residues 166 to 173 (GRPNAGKS), 191 to 195 (FTTLH), 213 to 216 (DIPG), 291 to 294 (NKLD), and 322 to 324 (SAL). Mg(2+)-binding residues include serine 173 and threonine 193. Residues 343–363 (GQRMDNEPPPLDPRFASAGPA) are disordered.

It belongs to the TRAFAC class OBG-HflX-like GTPase superfamily. OBG GTPase family. Monomer. The cofactor is Mg(2+).

The protein localises to the cytoplasm. An essential GTPase which binds GTP, GDP and possibly (p)ppGpp with moderate affinity, with high nucleotide exchange rates and a fairly low GTP hydrolysis rate. Plays a role in control of the cell cycle, stress response, ribosome biogenesis and in those bacteria that undergo differentiation, in morphogenesis control. This chain is GTPase Obg, found in Verminephrobacter eiseniae (strain EF01-2).